Here is a 740-residue protein sequence, read N- to C-terminus: DNA (cytosine-5)-methyltransferase 3C (740 aa).

Disordered stretches follow at residues 75–99 (LTGD…PVMP) and 248–312 (FKPT…DVTN). One can recognise an ADD domain in the interval 309–441 (DVTNNKGNLE…LQDFFTTDPD (133 aa)). A GATA-type; atypical zinc finger spans residues 320-350 (HCLSCGRKDPVSFHPLFEGGLCQSCRDRFLE). A PHD-type; atypical zinc finger spans residues 361-417 (QSYCTVCCEGRELLLCSNTSCCRCFCVECLEVLVGAGTAEDVKLQEPWSCYMCLPQR). Positions 462-740 (IRVLSLFDGI…APLKDHFACE (279 aa)) constitute an SAM-dependent MTase C5-type domain. I471, T473, E492, D514, and I515 together coordinate S-adenosyl-L-methionine. The active site involves C538. Residues R719 and W721 each coordinate S-adenosyl-L-methionine.

It belongs to the class I-like SAM-binding methyltransferase superfamily. C5-methyltransferase family. In terms of assembly, homodimer. Interacts with DNMT3L. Interacts with SPOCD1; recruiting Dnmt3C to transposons. As to expression, specifically expressed in testis.

The protein resides in the nucleus. It catalyses the reaction a 2'-deoxycytidine in DNA + S-adenosyl-L-methionine = a 5-methyl-2'-deoxycytidine in DNA + S-adenosyl-L-homocysteine + H(+). Functionally, DNA methyltransferase that specifically methylates the promoters of evolutionarily young retrotransposons in the male germline. De novo methylation and subsequent repression of transposable elements prevents their mobilization, which is essential for germline integrity. Compared to Dnmt3a and Dnmt3b, shows lower DNA methyltransferase efficiency. This Mus musculus (Mouse) protein is DNA (cytosine-5)-methyltransferase 3C.